Here is a 160-residue protein sequence, read N- to C-terminus: Transcription elongation factor GreB (160 aa).

It belongs to the GreA/GreB family. GreB subfamily.

Necessary for efficient RNA polymerase transcription elongation past template-encoded arresting sites. The arresting sites in DNA have the property of trapping a certain fraction of elongating RNA polymerases that pass through, resulting in locked ternary complexes. Cleavage of the nascent transcript by cleavage factors such as GreA or GreB allows the resumption of elongation from the new 3'terminus. GreB releases sequences of up to 9 nucleotides in length. The chain is Transcription elongation factor GreB from Vibrio vulnificus (strain CMCP6).